We begin with the raw amino-acid sequence, 193 residues long: Probable nicotinate-nucleotide adenylyltransferase (193 aa).

The protein belongs to the NadD family.

It carries out the reaction nicotinate beta-D-ribonucleotide + ATP + H(+) = deamido-NAD(+) + diphosphate. It participates in cofactor biosynthesis; NAD(+) biosynthesis; deamido-NAD(+) from nicotinate D-ribonucleotide: step 1/1. In terms of biological role, catalyzes the reversible adenylation of nicotinate mononucleotide (NaMN) to nicotinic acid adenine dinucleotide (NaAD). The protein is Probable nicotinate-nucleotide adenylyltransferase of Endomicrobium trichonymphae.